The sequence spans 110 residues: Large ribosomal subunit protein uL24 (110 aa).

Belongs to the universal ribosomal protein uL24 family. Part of the 50S ribosomal subunit.

In terms of biological role, one of two assembly initiator proteins, it binds directly to the 5'-end of the 23S rRNA, where it nucleates assembly of the 50S subunit. One of the proteins that surrounds the polypeptide exit tunnel on the outside of the subunit. The sequence is that of Large ribosomal subunit protein uL24 from Ureaplasma parvum serovar 3 (strain ATCC 27815 / 27 / NCTC 11736).